The primary structure comprises 298 residues: uncharacterized protein (298 aa).

10 consecutive transmembrane segments (helical) span residues I5 to F25, M36 to F56, V76 to A96, T97 to L117, S124 to V144, V147 to I167, V181 to I201, I216 to A236, I244 to G264, and S272 to L292. One can recognise an EamA 1 domain in the interval L17–D141. Positions L183–L288 constitute an EamA 2 domain.

The protein belongs to the EamA transporter family.

The protein resides in the cell membrane. This is an uncharacterized protein from Helicobacter pylori (strain J99 / ATCC 700824) (Campylobacter pylori J99).